A 430-amino-acid polypeptide reads, in one-letter code: MLDAKYFREELDQTAKKLATRGFDLDVAKLQKLEEQRKEVQVRTEQLQAERNSRSKAIGKAKASGEDIQPLLDAVSDLGEQLDNAKEELKVIQQELNDIIMGVPNLPADEVPEGADEDENQEVLTWGKPKSFDFEVKDHVDLGEALAKGMDFETAAKLTGARFVVMRGGIARMHRALTQFMLDLHTDEHGYLETYVPYMVNQDSLYGTGQLPKFGKDLFHIEGESQDQIPMSLIPTAEVPLTNLYRDEIADEEELPLKFTAHTPCFRSEAGSHGRDTRGLIRQHQFDKVELVWLVKPEQSMDALEQLTGHAETVLQKLELPYRKVLLCTGDMGFGAAKTYDLEVWLPAQEAYREISSCSNMQDFQARRMQARFRRKGAKKPELMHTLNGSGLAVGRALVAVLENYQQEDGSIVVPEVLRPYMGGVEVLKA.

Residue Thr-236–Glu-238 coordinates L-serine. Arg-267 to Glu-269 provides a ligand contact to ATP. L-serine is bound at residue Glu-290. Residue Glu-354 to Ser-357 participates in ATP binding. Ser-390 provides a ligand contact to L-serine.

Belongs to the class-II aminoacyl-tRNA synthetase family. Type-1 seryl-tRNA synthetase subfamily. Homodimer. The tRNA molecule binds across the dimer.

It is found in the cytoplasm. It carries out the reaction tRNA(Ser) + L-serine + ATP = L-seryl-tRNA(Ser) + AMP + diphosphate + H(+). The enzyme catalyses tRNA(Sec) + L-serine + ATP = L-seryl-tRNA(Sec) + AMP + diphosphate + H(+). It functions in the pathway aminoacyl-tRNA biosynthesis; selenocysteinyl-tRNA(Sec) biosynthesis; L-seryl-tRNA(Sec) from L-serine and tRNA(Sec): step 1/1. Catalyzes the attachment of serine to tRNA(Ser). Is also able to aminoacylate tRNA(Sec) with serine, to form the misacylated tRNA L-seryl-tRNA(Sec), which will be further converted into selenocysteinyl-tRNA(Sec). This Idiomarina loihiensis (strain ATCC BAA-735 / DSM 15497 / L2-TR) protein is Serine--tRNA ligase.